We begin with the raw amino-acid sequence, 844 residues long: Probable inorganic carbon transporter subunit DabA 1 (844 aa).

Residues Cys359, Asp361, His543, and Cys558 each coordinate Zn(2+).

It belongs to the inorganic carbon transporter (TC 9.A.2) DabA family. As to quaternary structure, forms a complex with DabB. Zn(2+) is required as a cofactor.

The protein resides in the cell inner membrane. In terms of biological role, part of an energy-coupled inorganic carbon pump. The sequence is that of Probable inorganic carbon transporter subunit DabA 1 from Bradyrhizobium sp. (strain BTAi1 / ATCC BAA-1182).